The sequence spans 693 residues: Glycine--tRNA ligase beta subunit (693 aa).

The protein belongs to the class-II aminoacyl-tRNA synthetase family. In terms of assembly, tetramer of two alpha and two beta subunits.

Its subcellular location is the cytoplasm. The enzyme catalyses tRNA(Gly) + glycine + ATP = glycyl-tRNA(Gly) + AMP + diphosphate. The chain is Glycine--tRNA ligase beta subunit from Vibrio vulnificus (strain YJ016).